Here is a 486-residue protein sequence, read N- to C-terminus: Protein nucleotidyltransferase YdiU (486 aa).

Residues Gly89, Gly91, Arg92, Lys112, Asp124, Gly125, Arg175, and Arg182 each coordinate ATP. The Proton acceptor role is filled by Asp251. Mg(2+) is bound by residues Asn252 and Asp261. Position 261 (Asp261) interacts with ATP.

This sequence belongs to the SELO family. Mg(2+) serves as cofactor. Mn(2+) is required as a cofactor.

The enzyme catalyses L-seryl-[protein] + ATP = 3-O-(5'-adenylyl)-L-seryl-[protein] + diphosphate. It catalyses the reaction L-threonyl-[protein] + ATP = 3-O-(5'-adenylyl)-L-threonyl-[protein] + diphosphate. The catalysed reaction is L-tyrosyl-[protein] + ATP = O-(5'-adenylyl)-L-tyrosyl-[protein] + diphosphate. It carries out the reaction L-histidyl-[protein] + UTP = N(tele)-(5'-uridylyl)-L-histidyl-[protein] + diphosphate. The enzyme catalyses L-seryl-[protein] + UTP = O-(5'-uridylyl)-L-seryl-[protein] + diphosphate. It catalyses the reaction L-tyrosyl-[protein] + UTP = O-(5'-uridylyl)-L-tyrosyl-[protein] + diphosphate. Functionally, nucleotidyltransferase involved in the post-translational modification of proteins. It can catalyze the addition of adenosine monophosphate (AMP) or uridine monophosphate (UMP) to a protein, resulting in modifications known as AMPylation and UMPylation. This chain is Protein nucleotidyltransferase YdiU, found in Shouchella clausii (strain KSM-K16) (Alkalihalobacillus clausii).